The chain runs to 436 residues: Glutamyl-tRNA reductase (436 aa).

Residues 49-52, S109, 114-116, and Q120 each bind substrate; these read TCNR and EGQ. The active-site Nucleophile is the C50. 198–203 is a binding site for NADP(+); that stretch reads GAGRMS.

Belongs to the glutamyl-tRNA reductase family. Homodimer.

The catalysed reaction is (S)-4-amino-5-oxopentanoate + tRNA(Glu) + NADP(+) = L-glutamyl-tRNA(Glu) + NADPH + H(+). The protein operates within porphyrin-containing compound metabolism; protoporphyrin-IX biosynthesis; 5-aminolevulinate from L-glutamyl-tRNA(Glu): step 1/2. It participates in porphyrin-containing compound metabolism; chlorophyll biosynthesis. Functionally, catalyzes the NADPH-dependent reduction of glutamyl-tRNA(Glu) to glutamate 1-semialdehyde (GSA). The chain is Glutamyl-tRNA reductase from Prochlorococcus marinus (strain MIT 9312).